Consider the following 347-residue polypeptide: Dihydroorotate dehydrogenase (quinone) (347 aa).

FMN contacts are provided by residues 61 to 65 (AGLDK) and T85. Position 65 (K65) interacts with substrate. 110 to 114 (NRMGF) provides a ligand contact to substrate. N138 and N171 together coordinate FMN. N171 provides a ligand contact to substrate. The active-site Nucleophile is S174. N176 lines the substrate pocket. 2 residues coordinate FMN: K216 and T244. Residue 245 to 246 (NT) participates in substrate binding. FMN is bound by residues G267, G296, and 317-318 (YT).

The protein belongs to the dihydroorotate dehydrogenase family. Type 2 subfamily. As to quaternary structure, monomer. It depends on FMN as a cofactor.

The protein localises to the cell membrane. It carries out the reaction (S)-dihydroorotate + a quinone = orotate + a quinol. The protein operates within pyrimidine metabolism; UMP biosynthesis via de novo pathway; orotate from (S)-dihydroorotate (quinone route): step 1/1. Its function is as follows. Catalyzes the conversion of dihydroorotate to orotate with quinone as electron acceptor. The sequence is that of Dihydroorotate dehydrogenase (quinone) from Azotobacter vinelandii (strain DJ / ATCC BAA-1303).